Here is a 260-residue protein sequence, read N- to C-terminus: Putative sgc region transcriptional regulator (260 aa).

Residues 5-61 (RPDRIKQMLHYLWQHRHLSTQQAMELFGYAEATVRRDFQYIVNQYPGMIRGHGCLDF) form the HTH deoR-type domain. A DNA-binding region (H-T-H motif) is located at residues 22-41 (LSTQQAMELFGYAEATVRRD).

In terms of biological role, putative transcriptional regulator for the sgcREAQCX region. The chain is Putative sgc region transcriptional regulator (sgcR) from Escherichia coli (strain K12).